The chain runs to 209 residues: ATP synthase subunit delta (209 aa).

Belongs to the ATPase delta chain family. F-type ATPases have 2 components, F(1) - the catalytic core - and F(0) - the membrane proton channel. F(1) has five subunits: alpha(3), beta(3), gamma(1), delta(1), epsilon(1). F(0) has three main subunits: a(1), b(2) and c(10-14). The alpha and beta chains form an alternating ring which encloses part of the gamma chain. F(1) is attached to F(0) by a central stalk formed by the gamma and epsilon chains, while a peripheral stalk is formed by the delta and b chains.

The protein resides in the cell inner membrane. Its function is as follows. F(1)F(0) ATP synthase produces ATP from ADP in the presence of a proton or sodium gradient. F-type ATPases consist of two structural domains, F(1) containing the extramembraneous catalytic core and F(0) containing the membrane proton channel, linked together by a central stalk and a peripheral stalk. During catalysis, ATP synthesis in the catalytic domain of F(1) is coupled via a rotary mechanism of the central stalk subunits to proton translocation. This protein is part of the stalk that links CF(0) to CF(1). It either transmits conformational changes from CF(0) to CF(1) or is implicated in proton conduction. The chain is ATP synthase subunit delta from Psychrobacter sp. (strain PRwf-1).